Consider the following 184-residue polypeptide: Ribosome-recycling factor (184 aa).

Belongs to the RRF family.

It is found in the cytoplasm. Functionally, responsible for the release of ribosomes from messenger RNA at the termination of protein biosynthesis. May increase the efficiency of translation by recycling ribosomes from one round of translation to another. This Aster yellows witches'-broom phytoplasma (strain AYWB) protein is Ribosome-recycling factor.